A 213-amino-acid polypeptide reads, in one-letter code: Octanoyltransferase (213 aa).

The 176-residue stretch at 32–207 (ENTPDEIWLV…NILALLNNPP (176 aa)) folds into the BPL/LPL catalytic domain. Substrate contacts are provided by residues 71–78 (RGGQVTYH), 138–140 (SLG), and 151–153 (GLA). Cys169 acts as the Acyl-thioester intermediate in catalysis.

This sequence belongs to the LipB family.

The protein resides in the cytoplasm. The catalysed reaction is octanoyl-[ACP] + L-lysyl-[protein] = N(6)-octanoyl-L-lysyl-[protein] + holo-[ACP] + H(+). Its pathway is protein modification; protein lipoylation via endogenous pathway; protein N(6)-(lipoyl)lysine from octanoyl-[acyl-carrier-protein]: step 1/2. In terms of biological role, catalyzes the transfer of endogenously produced octanoic acid from octanoyl-acyl-carrier-protein onto the lipoyl domains of lipoate-dependent enzymes. Lipoyl-ACP can also act as a substrate although octanoyl-ACP is likely to be the physiological substrate. The chain is Octanoyltransferase from Citrobacter koseri (strain ATCC BAA-895 / CDC 4225-83 / SGSC4696).